The sequence spans 233 residues: Upstream activation factor subunit spp27 (233 aa).

The DEK-C domain occupies 1–53 (MEEYETDIKQILGTVDRQTVSAKQVRQLLEERRKVDLSAHKKDLNALILKCFD). 2 disordered regions span residues 55–122 (TAAP…KPMK) and 194–233 (IPDDQLPKPQPKNEEPAAPNDLPKQEEKELVEPPTAESTA). The 78-residue stretch at 116-193 (PLNKPMKLSP…NKYLTNLMTK (78 aa)) folds into the SWIB/MDM2 domain. Residues 194 to 208 (IPDDQLPKPQPKNEE) show a composition bias toward basic and acidic residues.

As to quaternary structure, component of the UAF (upstream activation factor) complex which consists of spp27/uaf30, rrn5, rrn10, and histones H3 and H4. Interacts with rrn10.

Its subcellular location is the cytoplasm. The protein resides in the nucleus. Its function is as follows. Component of the UAF (upstream activation factor) complex which interacts with the upstream element of the RNA polymerase I promoter and forms a stable preinitiation complex. UAF seems to stimulate basal transcription to a fully activated level. The protein is Upstream activation factor subunit spp27 (spp27) of Schizosaccharomyces pombe (strain 972 / ATCC 24843) (Fission yeast).